The sequence spans 549 residues: Probable protein kinase UbiB (549 aa).

Residues 123–501 (DFDDVPLASA…QHKAHKSNYL (379 aa)) form the Protein kinase domain. ATP-binding positions include 129–137 (LASASIAQV) and K152. Catalysis depends on D287, which acts as the Proton acceptor. Transmembrane regions (helical) follow at residues 498-517 (SNYL…ILFT) and 521-540 (TLWA…LLGW).

Belongs to the ABC1 family. UbiB subfamily.

It is found in the cell inner membrane. The protein operates within cofactor biosynthesis; ubiquinone biosynthesis [regulation]. Functionally, is probably a protein kinase regulator of UbiI activity which is involved in aerobic coenzyme Q (ubiquinone) biosynthesis. The sequence is that of Probable protein kinase UbiB from Shewanella denitrificans (strain OS217 / ATCC BAA-1090 / DSM 15013).